A 282-amino-acid chain; its full sequence is Shikimate dehydrogenase (NADP(+)) (282 aa).

Shikimate contacts are provided by residues 16 to 18 and Thr-63; that span reads SLS. Catalysis depends on Lys-67, which acts as the Proton acceptor. Asn-88 and Asp-103 together coordinate shikimate. NADP(+)-binding positions include 128–132 and Gly-243; that span reads GAGGA.

The protein belongs to the shikimate dehydrogenase family. In terms of assembly, homodimer.

The enzyme catalyses shikimate + NADP(+) = 3-dehydroshikimate + NADPH + H(+). It participates in metabolic intermediate biosynthesis; chorismate biosynthesis; chorismate from D-erythrose 4-phosphate and phosphoenolpyruvate: step 4/7. In terms of biological role, involved in the biosynthesis of the chorismate, which leads to the biosynthesis of aromatic amino acids. Catalyzes the reversible NADPH linked reduction of 3-dehydroshikimate (DHSA) to yield shikimate (SA). This is Shikimate dehydrogenase (NADP(+)) from Xylella fastidiosa (strain 9a5c).